A 105-amino-acid chain; its full sequence is Urease subunit beta (105 aa).

The protein belongs to the urease beta subunit family. As to quaternary structure, heterotrimer of UreA (gamma), UreB (beta) and UreC (alpha) subunits. Three heterotrimers associate to form the active enzyme.

Its subcellular location is the cytoplasm. The catalysed reaction is urea + 2 H2O + H(+) = hydrogencarbonate + 2 NH4(+). The protein operates within nitrogen metabolism; urea degradation; CO(2) and NH(3) from urea (urease route): step 1/1. The sequence is that of Urease subunit beta from Marinobacter nauticus (strain ATCC 700491 / DSM 11845 / VT8) (Marinobacter aquaeolei).